The following is a 341-amino-acid chain: Mitochondrial transcription factor 1 (341 aa).

S-adenosyl-L-methionine-binding residues include leucine 23, glutamate 77, aspartate 101, and asparagine 137.

It belongs to the class I-like SAM-binding methyltransferase superfamily. rRNA adenine N(6)-methyltransferase family.

It is found in the mitochondrion. Functionally, mitochondrial transcription factor that confers selective promoter recognition on the core subunit of the yeast mitochondrial RNA polymerase. Interacts with DNA in a non-specific manner. This is Mitochondrial transcription factor 1 (MTF1) from Saccharomyces paradoxus (Yeast).